Consider the following 417-residue polypeptide: Serine hydroxymethyltransferase (417 aa).

(6S)-5,6,7,8-tetrahydrofolate contacts are provided by residues Leu122 and 126–128 (GHL). Position 230 is an N6-(pyridoxal phosphate)lysine (Lys230). 355–357 (SPF) serves as a coordination point for (6S)-5,6,7,8-tetrahydrofolate.

It belongs to the SHMT family. In terms of assembly, homodimer. It depends on pyridoxal 5'-phosphate as a cofactor.

The protein resides in the cytoplasm. It carries out the reaction (6R)-5,10-methylene-5,6,7,8-tetrahydrofolate + glycine + H2O = (6S)-5,6,7,8-tetrahydrofolate + L-serine. It participates in one-carbon metabolism; tetrahydrofolate interconversion. Its pathway is amino-acid biosynthesis; glycine biosynthesis; glycine from L-serine: step 1/1. Functionally, catalyzes the reversible interconversion of serine and glycine with tetrahydrofolate (THF) serving as the one-carbon carrier. This reaction serves as the major source of one-carbon groups required for the biosynthesis of purines, thymidylate, methionine, and other important biomolecules. Also exhibits THF-independent aldolase activity toward beta-hydroxyamino acids, producing glycine and aldehydes, via a retro-aldol mechanism. The polypeptide is Serine hydroxymethyltransferase (Francisella tularensis subsp. mediasiatica (strain FSC147)).